Reading from the N-terminus, the 576-residue chain is V-type ATP synthase alpha chain (576 aa).

238-245 (GPFGAGKT) provides a ligand contact to ATP.

Belongs to the ATPase alpha/beta chains family.

It catalyses the reaction ATP + H2O + 4 H(+)(in) = ADP + phosphate + 5 H(+)(out). Functionally, produces ATP from ADP in the presence of a proton gradient across the membrane. The V-type alpha chain is a catalytic subunit. The polypeptide is V-type ATP synthase alpha chain (Borrelia turicatae (strain 91E135)).